The following is a 287-amino-acid chain: NADH-cytochrome b5 reductase 1 (287 aa).

Residues 5 to 25 (FEALVTALVLAVSFIFIYGKF) form a helical membrane-spanning segment. In terms of domain architecture, FAD-binding FR-type spans 41–145 (KDWQEFSLLT…RGPKGFYHYE (105 aa)). FAD contacts are provided by residues 125 to 142 (AELA…KGFY) and 151 to 183 (EIGM…RVCL).

It belongs to the flavoprotein pyridine nucleotide cytochrome reductase family. Monomer. Component of the 2-(3-amino-3-carboxypropyl)histidine synthase complex composed of DPH1, DPH2, DPH3 and a NADH-dependent reductase, predominantly CBR1. FAD serves as cofactor.

The protein localises to the mitochondrion outer membrane. The catalysed reaction is 2 Fe(III)-[cytochrome b5] + NADH = 2 Fe(II)-[cytochrome b5] + NAD(+) + H(+). It carries out the reaction 2 Fe(3+)-[Dph3] + NADH = 2 Fe(2+)-[Dph3] + NAD(+) + H(+). The protein operates within protein modification; peptidyl-diphthamide biosynthesis. In terms of biological role, NADH-dependent reductase for DPH3 and cytochrome b5. Required for the first step of diphthamide biosynthesis, a post-translational modification of histidine which occurs in elongation factor 2. DPH1 and DPH2 transfer a 3-amino-3-carboxypropyl (ACP) group from S-adenosyl-L-methionine (SAM) to a histidine residue, the reaction is assisted by a reduction system comprising DPH3 and a NADH-dependent reductase, predominantly CBR1. By reducing DPH3, also involved in the formation of the tRNA wobble base modification mcm5s 2U (5-methoxycarbonylmethyl-2-thiouridine), mediated by the elongator complex. The cytochrome b5/NADH cytochrome b5 reductase electron transfer system supports the catalytic activity of several sterol biosynthetic enzymes. The polypeptide is NADH-cytochrome b5 reductase 1 (CBR1) (Eremothecium gossypii (strain ATCC 10895 / CBS 109.51 / FGSC 9923 / NRRL Y-1056) (Yeast)).